We begin with the raw amino-acid sequence, 119 residues long: RNA guanine-N7 methyltransferase activating subunit (119 aa).

An interaction with RNMT region spans residues 1–55 (MSDTSEEIPNFEEMFASRFTKDDKEYQEYLKRPPESPPIVEEWNSRAGGNQRNRG). The disordered stretch occupies residues 30–119 (LKRPPESPPI…HNQRPPYGYY (90 aa)). Residue Ser-36 is modified to Phosphoserine. The short motif at 36–42 (SPPIVEE) is the RNMT-activating domain element. Residues 47 to 61 (AGGNQRNRGNWLQDN) show a composition bias toward polar residues. The interval 56–119 (NWLQDNRQFR…HNQRPPYGYY (64 aa)) is RNA-binding. Basic and acidic residues predominate over residues 62 to 73 (RQFRGRDNRRGW). Arg-85 is modified (omega-N-methylarginine). Ser-86 is subject to Phosphoserine. Over residues 89–112 (NNNYPQQRPEPYYQQQYTQYGHNQ) the composition is skewed to low complexity.

The protein belongs to the RAM family. Interacts with RNMT; this interaction enhances mRNA binding and cap methyltransferase activity.

The protein localises to the nucleus. Its function is as follows. Regulatory subunit of the mRNA-capping methyltransferase RNMT:RAMAC complex that methylates the N7 position of the added guanosine to the 5'-cap structure of mRNAs. Promotes the recruitment of the methyl donor, S-adenosyl-L-methionine, to RNMT. Regulates RNMT expression by a post-transcriptional stabilizing mechanism. Binds RNA. This is RNA guanine-N7 methyltransferase activating subunit (Ramac) from Mus musculus (Mouse).